The chain runs to 298 residues: Protein ILRUN (298 aa).

Residues 199 to 277 form a disordered region; sequence NTQPHRKVEG…SVNLSPSSHA (79 aa). Phosphoserine is present on residues serine 215 and serine 222. The segment covering 242 to 255 has biased composition (low complexity); that stretch reads TWAPAPDTWAPAPD. Over residues 262–277 the composition is skewed to polar residues; sequence NRLSQNSVNLSPSSHA. Serine 272 carries the post-translational modification Phosphoserine.

In terms of assembly, interacts with IRF3; the interaction inhibits IRF3 binding to its DNA consensus sequence. Expressed in lung (at protein level).

It is found in the cytoplasm. Its subcellular location is the nucleus. Functionally, negative regulator of innate antiviral response. Blocks IRF3-dependent cytokine production such as IFNA, IFNB and TNF. Interacts with IRF3 and inhibits IRF3 recruitment to type I IFN promoter sequences while also reducing nuclear levels of the coactivators EP300 and CREBBP. This is Protein ILRUN from Homo sapiens (Human).